The chain runs to 138 residues: Large ribosomal subunit protein uL16 (138 aa).

It belongs to the universal ribosomal protein uL16 family. As to quaternary structure, part of the 50S ribosomal subunit.

In terms of biological role, binds 23S rRNA and is also seen to make contacts with the A and possibly P site tRNAs. In Neisseria gonorrhoeae (strain ATCC 700825 / FA 1090), this protein is Large ribosomal subunit protein uL16.